Here is a 335-residue protein sequence, read N- to C-terminus: Biotin synthase (335 aa).

The Radical SAM core domain occupies 43-269 (YFGKKVKLNM…INPTKEIRIA (227 aa)). [4Fe-4S] cluster is bound by residues Cys61, Cys65, and Cys68. Cys104, Cys137, Cys197, and Arg267 together coordinate [2Fe-2S] cluster.

Belongs to the radical SAM superfamily. Biotin synthase family. As to quaternary structure, homodimer. The cofactor is [4Fe-4S] cluster. Requires [2Fe-2S] cluster as cofactor.

The enzyme catalyses (4R,5S)-dethiobiotin + (sulfur carrier)-SH + 2 reduced [2Fe-2S]-[ferredoxin] + 2 S-adenosyl-L-methionine = (sulfur carrier)-H + biotin + 2 5'-deoxyadenosine + 2 L-methionine + 2 oxidized [2Fe-2S]-[ferredoxin]. The protein operates within cofactor biosynthesis; biotin biosynthesis; biotin from 7,8-diaminononanoate: step 2/2. Its function is as follows. Catalyzes the conversion of dethiobiotin (DTB) to biotin by the insertion of a sulfur atom into dethiobiotin via a radical-based mechanism. The sequence is that of Biotin synthase from Staphylococcus aureus (strain USA300).